Here is a 2334-residue protein sequence, read N- to C-terminus: Centriolin (2334 aa).

A disordered region spans residues 1 to 70; that stretch reads MKKGSERRLS…ESTVPLEPQQ (70 aa). The segment covering 21 to 38 has biased composition (low complexity); sequence PGPSSLRSSMRSRSLSPL. 4 LRR repeats span residues 126-147, 148-169, 170-191, and 194-215; these read KLEVLNLSYNLIVKIEKVDKLL, RLRELNLSYNKISKIEGLENMC, NLQKLNLAGNEIEHIPVWFAKK, and SLRVLNLKGNKISSLQDVSKLK. The 39-residue stretch at 228–266 folds into the LRRCT domain; the sequence is NPVVALPHYLQFIIFHLRSLESLEGQPVTTQDRQEAFER. 2 coiled-coil regions span residues 265-343 and 437-800; these read ERFS…VELT and DLQL…LNHV. Disordered stretches follow at residues 542-562 and 751-771; these read DSLDPKDPKHSHMKAQKRGKE and SLRDALGKAQSSEEKQQENNE. S832 is subject to Phosphoserine. Residues 858–1102 are a coiled coil; sequence EKEEAQVRER…ITRLRDVLNL (245 aa). Disordered stretches follow at residues 1154–1198, 1213–1245, and 1338–1360; these read SKVS…PLPA, KSFSKREDADSGGDSQEESGLDDQEEPPFVPPP, and LKSKQREERRQKASTQHSEEEVD. Over residues 1227–1238 the composition is skewed to acidic residues; it reads SQEESGLDDQEE. The stretch at 1320–2169 forms a coiled coil; it reads EHHNLENEVS…MRTLKSEVKD (850 aa). At S1478 the chain carries Phosphoserine. The interval 1951–2121 is required for centrosome localization; it reads MMFQKLQKER…ELVAQDNHER (171 aa). Residues 1988-2334 form a sufficient for interaction with HOOK2 region; that stretch reads QKSRLKQLLT…PLEEPNSYRH (347 aa). A compositionally biased stretch (low complexity) spans 2291 to 2307; that stretch reads TSTSTDSASSPSLPSLV. A disordered region spans residues 2291–2334; the sequence is TSTSTDSASSPSLPSLVEDSQHGHSQSSFQVLQVPLEEPNSYRH.

In terms of assembly, interacts with HOOK2. Interacts with EXOC6 and SNAPIN. Associates with the exocyst complex. In terms of tissue distribution, highly expressed in liver.

It is found in the cytoplasm. Its subcellular location is the cytoskeleton. The protein resides in the microtubule organizing center. The protein localises to the centrosome. It localises to the midbody. It is found in the midbody ring. Involved in cell cycle progression and cytokinesis. During the late steps of cytokinesis, anchors exocyst and SNARE complexes at the midbody, thereby allowing secretory vesicle-mediated abscission. The polypeptide is Centriolin (Cntrl) (Mus musculus (Mouse)).